We begin with the raw amino-acid sequence, 490 residues long: Hexokinase (490 aa).

One can recognise a Hexokinase domain in the interval 21–466 (QNLLEHIKHF…SGVGAALIAA (446 aa)). The segment at 75–209 (DGKETGTFLA…GLPIKVAALI (135 aa)) is hexokinase small subdomain. The segment at 210 to 455 (NDTTGTLIAS…DKVTIHAAED (246 aa)) is hexokinase large subdomain.

It belongs to the hexokinase family. As to quaternary structure, monomer.

It carries out the reaction a D-hexose + ATP = a D-hexose 6-phosphate + ADP + H(+). It catalyses the reaction D-fructose + ATP = D-fructose 6-phosphate + ADP + H(+). The enzyme catalyses D-glucose + ATP = D-glucose 6-phosphate + ADP + H(+). The protein operates within carbohydrate metabolism; hexose metabolism. It functions in the pathway carbohydrate degradation; glycolysis; D-glyceraldehyde 3-phosphate and glycerone phosphate from D-glucose: step 1/4. Catalyzes the phosphorylation of hexose, such as D-glucose and D-fructose, to hexose 6-phosphate (D-glucose 6-phosphate and D-fructose 6-phosphate, respectively). Mediates the initial step of glycolysis by catalyzing phosphorylation of D-glucose to D-glucose 6-phosphate. This chain is Hexokinase (hxkA), found in Emericella nidulans (strain FGSC A4 / ATCC 38163 / CBS 112.46 / NRRL 194 / M139) (Aspergillus nidulans).